We begin with the raw amino-acid sequence, 294 residues long: NAD kinase (294 aa).

The active-site Proton acceptor is the D72. NAD(+) contacts are provided by residues 72-73 (DG), 146-147 (ND), R157, R174, D176, 187-192 (TAYALS), and Q247.

This sequence belongs to the NAD kinase family. Requires a divalent metal cation as cofactor.

The protein localises to the cytoplasm. It carries out the reaction NAD(+) + ATP = ADP + NADP(+) + H(+). Its function is as follows. Involved in the regulation of the intracellular balance of NAD and NADP, and is a key enzyme in the biosynthesis of NADP. Catalyzes specifically the phosphorylation on 2'-hydroxyl of the adenosine moiety of NAD to yield NADP. The protein is NAD kinase of Saccharophagus degradans (strain 2-40 / ATCC 43961 / DSM 17024).